The primary structure comprises 149 residues: Ribonuclease pancreatic alpha-type (149 aa).

Residues M1–G25 form the signal peptide. Substrate is bound by residues K32 and R35. H37 (proton acceptor) is an active-site residue. 4 disulfide bridges follow: C51–C109, C65–C120, C83–C135, and C90–C97. Substrate-binding positions include K66–T70, K91, and R110. The Proton donor role is filled by H144.

It belongs to the pancreatic ribonuclease family. As to quaternary structure, monomer.

The protein resides in the secreted. It carries out the reaction an [RNA] containing cytidine + H2O = an [RNA]-3'-cytidine-3'-phosphate + a 5'-hydroxy-ribonucleotide-3'-[RNA].. The catalysed reaction is an [RNA] containing uridine + H2O = an [RNA]-3'-uridine-3'-phosphate + a 5'-hydroxy-ribonucleotide-3'-[RNA].. Its function is as follows. Endonuclease that catalyzes the cleavage of RNA on the 3' side of pyrimidine nucleotides. Acts on single-stranded and double-stranded RNA. This is Ribonuclease pancreatic alpha-type from Rattus fuscipes (Bush rat).